We begin with the raw amino-acid sequence, 655 residues long: Acetyl-coenzyme A synthetase (655 aa).

CoA is bound by residues 193-196 (RGNK) and T313. Residues 389-391 (GEP), 413-418 (DTWWQT), D502, and R517 contribute to the ATP site. S525 is a CoA binding site. Residue R528 coordinates ATP. Residues V539 and H541 each contribute to the Mg(2+) site. A CoA-binding site is contributed by R586. K611 is modified (N6-acetyllysine).

Belongs to the ATP-dependent AMP-binding enzyme family. Mg(2+) serves as cofactor. Acetylated. Deacetylation by the SIR2-homolog deacetylase activates the enzyme.

The enzyme catalyses acetate + ATP + CoA = acetyl-CoA + AMP + diphosphate. Functionally, catalyzes the conversion of acetate into acetyl-CoA (AcCoA), an essential intermediate at the junction of anabolic and catabolic pathways. AcsA undergoes a two-step reaction. In the first half reaction, AcsA combines acetate with ATP to form acetyl-adenylate (AcAMP) intermediate. In the second half reaction, it can then transfer the acetyl group from AcAMP to the sulfhydryl group of CoA, forming the product AcCoA. The sequence is that of Acetyl-coenzyme A synthetase from Psychrobacter cryohalolentis (strain ATCC BAA-1226 / DSM 17306 / VKM B-2378 / K5).